The sequence spans 144 residues: Large ribosomal subunit protein uL15 (144 aa).

Positions 1–44 (MNLNELQPAAGSRKLRNRVGRGTSSGNGKTSGRGQKGQKARGKV) are disordered. Over residues 23 to 35 (TSSGNGKTSGRGQ) the composition is skewed to gly residues.

Belongs to the universal ribosomal protein uL15 family. In terms of assembly, part of the 50S ribosomal subunit.

In terms of biological role, binds to the 23S rRNA. In Leuconostoc citreum (strain KM20), this protein is Large ribosomal subunit protein uL15.